Reading from the N-terminus, the 771-residue chain is Polyribonucleotide nucleotidyltransferase (771 aa).

Residues aspartate 487 and aspartate 493 each contribute to the Mg(2+) site. One can recognise a KH domain in the interval 554-613 (PRIETMQIDKAKIRDVIGTGGKVIREIVATTGAKVDIDDEGLIKISSSDLDQIEAARKWI). Positions 623-691 (GKIYDGKVVN…PRGKVRLSMR (69 aa)) constitute an S1 motif domain. The interval 696-771 (ETGAELEDTR…QGHVPDFLKD (76 aa)) is disordered. Residues 702–771 (EDTRPAREPR…QGHVPDFLKD (70 aa)) show a composition bias toward basic and acidic residues.

This sequence belongs to the polyribonucleotide nucleotidyltransferase family. Requires Mg(2+) as cofactor.

The protein resides in the cytoplasm. The enzyme catalyses RNA(n+1) + phosphate = RNA(n) + a ribonucleoside 5'-diphosphate. Its function is as follows. Involved in mRNA degradation. Catalyzes the phosphorolysis of single-stranded polyribonucleotides processively in the 3'- to 5'-direction. This is Polyribonucleotide nucleotidyltransferase from Sphingopyxis alaskensis (strain DSM 13593 / LMG 18877 / RB2256) (Sphingomonas alaskensis).